Consider the following 308-residue polypeptide: Putative mitochondrial transporter UCP3 (308 aa).

Over 1–10 the chain is Mitochondrial intermembrane; that stretch reads MVGLKPPEVP. The helical transmembrane segment at 11–32 threads the bilayer; it reads PTTAVKLLGAGTAACFADLLTF. Solcar repeat units lie at residues 11-102, 111-202, and 211-296; these read PTTA…VKQL, SSIT…IKEK, and DNLP…LKRA. At 33-73 the chain is on the mitochondrial matrix side; it reads PLDTAKVRLQIQGENQAARSAQYRGVLGTILTMVRNEGPRS. A helical transmembrane segment spans residues 74-96; the sequence is PYNGLVAGLQRQMSFASIRIGLY. The Mitochondrial intermembrane portion of the chain corresponds to 97-116; the sequence is DSVKQLYTPKGSDHSSITTR. Residues 117–133 traverse the membrane as a helical segment; it reads ILAGCTTGAMAVTCAQP. The Mitochondrial matrix segment spans residues 134-179; the sequence is TDVVKVRFQASIHAGPRSNRKYSGTMDAYRTIAREEGVRGLWKGIL. The helical transmembrane segment at 180–196 threads the bilayer; it reads PNITRNAIVNCAEMVTY. Residues 197–213 are Mitochondrial intermembrane-facing; the sequence is DVIKEKVLDYHLLTDNL. Residues 214-233 form a helical membrane-spanning segment; the sequence is PCHFVSAFGAGFCATVVASP. At 234 to 267 the chain is on the mitochondrial matrix side; sequence VDVVKTRYMNSPPGQYQNPLDCMLKMVTQEGPTA. Residues 268-290 form a helical membrane-spanning segment; that stretch reads FYKGFTPSFLRLGSWNVVMFVSY. Residues 275–297 form a purine nucleotide binding region; the sequence is SFLRLGSWNVVMFVSYEQLKRAL. The Mitochondrial intermembrane segment spans residues 291–308; it reads EQLKRALMKVQMLRESPF.

This sequence belongs to the mitochondrial carrier (TC 2.A.29) family. Interacts with HAX1; the interaction is direct and calcium-dependent.

The protein resides in the mitochondrion inner membrane. Its function is as follows. Putative transmembrane transporter that plays a role in mitochondrial metabolism via an as yet unclear mechanism. Originally, this mitochondrial protein was thought to act as a proton transmembrane transporter from the mitochondrial intermembrane space into the matrix, causing proton leaks through the inner mitochondrial membrane, thereby uncoupling mitochondrial membrane potential generation from ATP synthesis. However, this function is controversial and uncoupling may not be the function, or at least not the main function, but rather a consequence of more conventional metabolite transporter activity. The sequence is that of Putative mitochondrial transporter UCP3 from Sus scrofa (Pig).